The sequence spans 303 residues: E3 ubiquitin-protein ligase SINA-like 3 (303 aa).

The tract at residues 1–30 (MENITNNSERSLDRPKRQRPVSMENVGGTA) is disordered. The RING-type zinc-finger motif lies at 49-85 (CPICYHKLGAPIYQCDNGHIACSSCCKKVKYKCPYCS). Residues 99–286 (IVEAVVVSCP…MSIPYYLLDE (188 aa)) form an SBD region. The SIAH-type zinc-finger motif lies at 102 to 162 (AVVVSCPNAK…LYRHYHAEHK (61 aa)). Zn(2+) is bound by residues Cys-107, Cys-114, His-128, Cys-132, Cys-139, Cys-144, His-156, and His-161.

Belongs to the SINA (Seven in absentia) family.

It catalyses the reaction S-ubiquitinyl-[E2 ubiquitin-conjugating enzyme]-L-cysteine + [acceptor protein]-L-lysine = [E2 ubiquitin-conjugating enzyme]-L-cysteine + N(6)-ubiquitinyl-[acceptor protein]-L-lysine.. The protein operates within protein modification; protein ubiquitination. In terms of biological role, E3 ubiquitin-protein ligase that mediates ubiquitination and subsequent proteasomal degradation of target proteins. E3 ubiquitin ligases accept ubiquitin from an E2 ubiquitin-conjugating enzyme in the form of a thioester and then directly transfers the ubiquitin to targeted substrates. It probably triggers the ubiquitin-mediated degradation of different substrates. In Arabidopsis thaliana (Mouse-ear cress), this protein is E3 ubiquitin-protein ligase SINA-like 3.